The following is a 147-amino-acid chain: Hemoglobin subunit epsilon (147 aa).

The region spanning 3-147 (HLTAEEKAAI…VAIALGHKYH (145 aa)) is the Globin domain. Residues Ser14 and Ser51 each carry the phosphoserine modification. 2 residues coordinate heme b: His64 and His93.

It belongs to the globin family. Heterotetramer of two alpha chains and two epsilon chains in early embryonic hemoglobin Gower-2; two zeta chains and two epsilon chains in early embryonic hemoglobin Gower-1. As to expression, red blood cells.

The epsilon chain is a beta-type chain of early mammalian embryonic hemoglobin. The sequence is that of Hemoglobin subunit epsilon (HBE1) from Ateles belzebuth (White-bellied spider monkey).